A 506-amino-acid chain; its full sequence is Maturase K (506 aa).

Belongs to the intron maturase 2 family. MatK subfamily.

It is found in the plastid. It localises to the chloroplast. Usually encoded in the trnK tRNA gene intron. Probably assists in splicing its own and other chloroplast group II introns. The chain is Maturase K from Artanema fimbriatum.